The chain runs to 116 residues: Putative UPF0320 protein YLL065W (116 aa).

The protein belongs to the UPF0320 family.

This Saccharomyces cerevisiae (strain ATCC 204508 / S288c) (Baker's yeast) protein is Putative UPF0320 protein YLL065W.